Here is a 363-residue protein sequence, read N- to C-terminus: Probable L-tyrosine/L-aspartate decarboxylase (363 aa).

Lysine 208 bears the N6-(pyridoxal phosphate)lysine mark.

Belongs to the group II decarboxylase family. MfnA subfamily. It depends on pyridoxal 5'-phosphate as a cofactor.

It catalyses the reaction L-tyrosine + H(+) = tyramine + CO2. The enzyme catalyses L-aspartate + H(+) = beta-alanine + CO2. Its pathway is cofactor biosynthesis; methanofuran biosynthesis. It functions in the pathway cofactor biosynthesis; coenzyme A biosynthesis. Functionally, catalyzes the decarboxylation of L-tyrosine to produce tyramine for methanofuran biosynthesis. Can also catalyze the decarboxylation of L-aspartate to produce beta-alanine for coenzyme A (CoA) biosynthesis. This chain is Probable L-tyrosine/L-aspartate decarboxylase, found in Methanothermobacter thermautotrophicus (strain ATCC 29096 / DSM 1053 / JCM 10044 / NBRC 100330 / Delta H) (Methanobacterium thermoautotrophicum).